We begin with the raw amino-acid sequence, 136 residues long: uncharacterized protein (136 aa).

The protein resides in the mitochondrion. This is an uncharacterized protein from Marchantia polymorpha (Common liverwort).